The primary structure comprises 148 residues: Globin-3 (148 aa).

Residues 2-148 (TLTKHEQDIL…HVFPMMAAEI (147 aa)) enclose the Globin domain. Position 99 (His99) interacts with heme.

The protein belongs to the globin family. As to quaternary structure, monomer.

In terms of biological role, oxygen binding protein. The protein is Globin-3 of Paramphistomum epiclitum.